A 274-amino-acid chain; its full sequence is Tail assembly protein Gp25 (274 aa).

The disordered stretch occupies residues asparagine 221 to serine 250. Over residues proline 236–threonine 245 the composition is skewed to basic and acidic residues.

This sequence belongs to the L5likevirus tail assembly protein family. Interacts with tail assembly protein Gp24 and tape measure protein.

Its function is as follows. Promotes tail assembly by creating a scaffold for the tail tube proteins. The tail assembly proteins Gp24 and Gp25 would wrap the linear tape measure protein to create a tail assembly scaffold. It would allow polymerization of tail tube protein during which Gp24 and Gp25 are released and therefore are absent from the mature virion. The tail assembly protein Gp25 is produced by a rare -1 ribosomal frameshift. The ratio Gp24/Gp25 is important for proper tail assembly. The polypeptide is Tail assembly protein Gp25 (25) (Mycobacterium phage D29 (Mycobacteriophage D29)).